We begin with the raw amino-acid sequence, 318 residues long: Molybdenum cofactor insertion chaperone PaoD (318 aa).

As to quaternary structure, homodimer in solution. Interacts with MocA.

Chaperone required for the production of an active PaoABC aldehyde oxidoreductase. Stabilizes the PaoC subunit and is required for the insertion of the molybdenum cofactor into this subunit. Binds molybdenum cofactor. Binds the molybdopterin cytosine dinucleotide (MCD) form of the cofactor after its formation by the molybdenum cofactor cytidylyltransferase MocA. In Escherichia coli (strain K12), this protein is Molybdenum cofactor insertion chaperone PaoD.